The following is a 264-amino-acid chain: Adenosylcobinamide-GDP ribazoletransferase (264 aa).

The next 6 helical transmembrane spans lie at 39 to 59 (IAYAVPLAGAAIGLAGAAILI), 63 to 83 (ALGLPNLVAAILAVLTCVLLT), 121 to 141 (ACALVFSLLLRVALLDGLLAL), 148 to 168 (LALIAAASLSRAAGMLLLEFL), 201 to 221 (LLIVPSTGVGATLMAIGLSVL), and 241 to 261 (VAGAVQQLCEIAFLMGVLIYA).

The protein belongs to the CobS family. Mg(2+) is required as a cofactor.

It localises to the cell inner membrane. It catalyses the reaction alpha-ribazole + adenosylcob(III)inamide-GDP = adenosylcob(III)alamin + GMP + H(+). The catalysed reaction is alpha-ribazole 5'-phosphate + adenosylcob(III)inamide-GDP = adenosylcob(III)alamin 5'-phosphate + GMP + H(+). Its pathway is cofactor biosynthesis; adenosylcobalamin biosynthesis; adenosylcobalamin from cob(II)yrinate a,c-diamide: step 7/7. Joins adenosylcobinamide-GDP and alpha-ribazole to generate adenosylcobalamin (Ado-cobalamin). Also synthesizes adenosylcobalamin 5'-phosphate from adenosylcobinamide-GDP and alpha-ribazole 5'-phosphate. The polypeptide is Adenosylcobinamide-GDP ribazoletransferase (Azorhizobium caulinodans (strain ATCC 43989 / DSM 5975 / JCM 20966 / LMG 6465 / NBRC 14845 / NCIMB 13405 / ORS 571)).